The following is a 102-amino-acid chain: Urease subunit beta (102 aa).

The protein belongs to the urease beta subunit family. In terms of assembly, heterotrimer of UreA (gamma), UreB (beta) and UreC (alpha) subunits. Three heterotrimers associate to form the active enzyme.

The protein resides in the cytoplasm. The catalysed reaction is urea + 2 H2O + H(+) = hydrogencarbonate + 2 NH4(+). It participates in nitrogen metabolism; urea degradation; CO(2) and NH(3) from urea (urease route): step 1/1. This chain is Urease subunit beta, found in Clostridium perfringens.